The primary structure comprises 89 residues: Large ribosomal subunit protein bL27 (89 aa).

The interval 1–21 (MAHKKAGGSSRNGRDSESKRL) is disordered.

The protein belongs to the bacterial ribosomal protein bL27 family.

This is Large ribosomal subunit protein bL27 from Chelativorans sp. (strain BNC1).